A 641-amino-acid chain; its full sequence is 1-deoxy-D-xylulose-5-phosphate synthase (641 aa).

Thiamine diphosphate-binding positions include His-79 and 120–122 (AHS). Asp-151 is a Mg(2+) binding site. Residues 152–153 (GA), Asn-180, Tyr-290, and Glu-372 each bind thiamine diphosphate. Asn-180 contacts Mg(2+).

This sequence belongs to the transketolase family. DXPS subfamily. Homodimer. Mg(2+) is required as a cofactor. Requires thiamine diphosphate as cofactor.

The enzyme catalyses D-glyceraldehyde 3-phosphate + pyruvate + H(+) = 1-deoxy-D-xylulose 5-phosphate + CO2. Its pathway is metabolic intermediate biosynthesis; 1-deoxy-D-xylulose 5-phosphate biosynthesis; 1-deoxy-D-xylulose 5-phosphate from D-glyceraldehyde 3-phosphate and pyruvate: step 1/1. In terms of biological role, catalyzes the acyloin condensation reaction between C atoms 2 and 3 of pyruvate and glyceraldehyde 3-phosphate to yield 1-deoxy-D-xylulose-5-phosphate (DXP). This Bradyrhizobium sp. (strain ORS 278) protein is 1-deoxy-D-xylulose-5-phosphate synthase.